Here is a 177-residue protein sequence, read N- to C-terminus: Nuclear export protein (177 aa).

2 short sequence motifs (nuclear export signal) span residues 91–100 (LWLPMKSLSL) and 117–127 (MKHQILTRLKL).

As to quaternary structure, binds M1 protein. May interact with human nucleoporins and exportin XPO1/CRM1.

It localises to the virion. The protein localises to the host nucleus. Mediates the nuclear export of encapsidated genomic RNAs (ribonucleoproteins, RNPs). Acts as an adapter between viral RNPs complexes and the nuclear export machinery of the cell. Possesses no intrinsic RNA-binding activity, but includes a C-terminal M1-binding domain. This domain is believed to allow recognition of RNPs to which the M1 protein is bound. Because the M1 protein is not available in large quantities until the later stages of infection, such an indirect recognition mechanism probably ensures that genomic RNPs are not exported from the nucleus before sufficient quantities of viral mRNA and progeny genomic RNA have been synthesized. Furthermore, the RNPs enters the cytoplasm only when they have associated with the M1 protein that is necessary to guide them to the plasma membrane. May down-regulate viral RNA synthesis when overproduced. This Influenza C virus (strain C/Great lakes/1167/1954) protein is Nuclear export protein (NS).